The sequence spans 117 residues: Small ribosomal subunit protein uS8c (117 aa).

Belongs to the universal ribosomal protein uS8 family. Part of the 30S ribosomal subunit.

Its subcellular location is the plastid. The protein resides in the chloroplast. One of the primary rRNA binding proteins, it binds directly to 16S rRNA central domain where it helps coordinate assembly of the platform of the 30S subunit. The sequence is that of Small ribosomal subunit protein uS8c (rps8) from Cyanidioschyzon merolae (strain NIES-3377 / 10D) (Unicellular red alga).